The chain runs to 340 residues: DNA-directed RNA polymerase subunit alpha (340 aa).

An alpha N-terminal domain (alpha-NTD) region spans residues 1 to 238; it reads MADTFVAKNW…EQLTVFVNFD (238 aa). Residues 253 to 340 are alpha C-terminal domain (alpha-CTD); the sequence is AKLNENLFRS…QAPAPAQPKA (88 aa).

The protein belongs to the RNA polymerase alpha chain family. As to quaternary structure, homodimer. The RNAP catalytic core consists of 2 alpha, 1 beta, 1 beta' and 1 omega subunit. When a sigma factor is associated with the core the holoenzyme is formed, which can initiate transcription.

The catalysed reaction is RNA(n) + a ribonucleoside 5'-triphosphate = RNA(n+1) + diphosphate. Its function is as follows. DNA-dependent RNA polymerase catalyzes the transcription of DNA into RNA using the four ribonucleoside triphosphates as substrates. In Myxococcus xanthus (strain DK1622), this protein is DNA-directed RNA polymerase subunit alpha.